The sequence spans 688 residues: DNA ligase (688 aa).

Residues 42–46, 91–92, and E128 each bind NAD(+); these read DAEYD and SL. K130 serves as the catalytic N6-AMP-lysine intermediate. 4 residues coordinate NAD(+): R151, E188, K305, and K329. Zn(2+) is bound by residues C423, C426, C441, and C447. The region spanning 608–688 is the BRCT domain; sequence APQGVLAGKT…GMRKLLEGQL (81 aa).

The protein belongs to the NAD-dependent DNA ligase family. LigA subfamily. Mg(2+) serves as cofactor. Requires Mn(2+) as cofactor.

It carries out the reaction NAD(+) + (deoxyribonucleotide)n-3'-hydroxyl + 5'-phospho-(deoxyribonucleotide)m = (deoxyribonucleotide)n+m + AMP + beta-nicotinamide D-nucleotide.. In terms of biological role, DNA ligase that catalyzes the formation of phosphodiester linkages between 5'-phosphoryl and 3'-hydroxyl groups in double-stranded DNA using NAD as a coenzyme and as the energy source for the reaction. It is essential for DNA replication and repair of damaged DNA. The polypeptide is DNA ligase (Paraburkholderia xenovorans (strain LB400)).